The primary structure comprises 377 residues: Nitric oxide reductase FlRd-NAD(+) reductase (377 aa).

This sequence belongs to the FAD-dependent oxidoreductase family. FAD is required as a cofactor.

The protein localises to the cytoplasm. The catalysed reaction is 2 reduced [nitric oxide reductase rubredoxin domain] + NAD(+) + H(+) = 2 oxidized [nitric oxide reductase rubredoxin domain] + NADH. The protein operates within nitrogen metabolism; nitric oxide reduction. One of at least two accessory proteins for anaerobic nitric oxide (NO) reductase. Reduces the rubredoxin moiety of NO reductase. This Escherichia coli O157:H7 protein is Nitric oxide reductase FlRd-NAD(+) reductase.